A 283-amino-acid polypeptide reads, in one-letter code: 2-dehydro-3-deoxyphosphooctonate aldolase (283 aa).

It belongs to the KdsA family.

The protein localises to the cytoplasm. The enzyme catalyses D-arabinose 5-phosphate + phosphoenolpyruvate + H2O = 3-deoxy-alpha-D-manno-2-octulosonate-8-phosphate + phosphate. The protein operates within carbohydrate biosynthesis; 3-deoxy-D-manno-octulosonate biosynthesis; 3-deoxy-D-manno-octulosonate from D-ribulose 5-phosphate: step 2/3. It participates in bacterial outer membrane biogenesis; lipopolysaccharide biosynthesis. The sequence is that of 2-dehydro-3-deoxyphosphooctonate aldolase from Laribacter hongkongensis (strain HLHK9).